Reading from the N-terminus, the 182-residue chain is UPF0397 protein BCQ_2505 (182 aa).

5 consecutive transmembrane segments (helical) span residues 9–29 (VVAI…GFSI), 40–60 (AILT…IGLI), 71–91 (WGIW…MGFI), 114–134 (ITGL…DIIV), and 142–162 (IVIQ…VLGL).

The protein belongs to the UPF0397 family.

The protein resides in the cell membrane. The polypeptide is UPF0397 protein BCQ_2505 (Bacillus cereus (strain Q1)).